The following is a 165-amino-acid chain: Protein FAM219A (165 aa).

An N-acetylmethionine modification is found at Met1. The tract at residues 1-114 (MMEEIDRFQV…SRYSSSGYSS (114 aa)) is disordered. Residues 32 to 44 (CDAREEKQRELAR) are compositionally biased toward basic and acidic residues. The segment covering 49–63 (KNGSMGSPVNQQPKK) has biased composition (polar residues). Residues Ser55 and Ser85 each carry the phosphoserine modification. The residue at position 96 (Thr96) is a Phosphothreonine. Phosphoserine is present on residues Ser98 and Ser105. Residues 105–114 (SRYSSSGYSS) are compositionally biased toward low complexity.

The protein belongs to the FAM219 family.

The chain is Protein FAM219A (FAM219A) from Macaca fascicularis (Crab-eating macaque).